The following is a 384-amino-acid chain: uncharacterized protein (384 aa).

The Integrase catalytic domain occupies E137–A303.

This is an uncharacterized protein from Escherichia coli (strain K12).